A 687-amino-acid polypeptide reads, in one-letter code: Auxin response factor 14 (687 aa).

A DNA-binding region (TF-B3) is located at residues 133–235; the sequence is FCKTLTASDT…QLRLGVRRAV (103 aa).

It belongs to the ARF family. Homo and heterodimers. Expressed in roots, culms, leaves and young panicles.

Its subcellular location is the nucleus. Auxin response factors (ARFs) are transcriptional factors that bind specifically to the DNA sequence 5'-TGTCTC-3' found in the auxin-responsive promoter elements (AuxREs). The chain is Auxin response factor 14 (ARF14) from Oryza sativa subsp. japonica (Rice).